The following is a 188-amino-acid chain: Ribosome maturation factor RimP (188 aa).

Belongs to the RimP family.

The protein resides in the cytoplasm. In terms of biological role, required for maturation of 30S ribosomal subunits. In Corynebacterium aurimucosum (strain ATCC 700975 / DSM 44827 / CIP 107346 / CN-1) (Corynebacterium nigricans), this protein is Ribosome maturation factor RimP.